We begin with the raw amino-acid sequence, 339 residues long: MASFEAQQETFDCSEYGNGSCPENERSLGVRAAMYSLMACAIFITIFGNLAMIISISYFKQLHTPTNLLILSMAVTDFLLGFTIMPYSMVRSVENCWYFGLTFCKIHYSFDLMLSITSIFHLCSVAVDRFYAICHPLHYCTKMTIPVVRRLLLVCWSVPGAFAFGVVFSEAYADGIEGYDILVACSSSCPVMFNKLWGTTLFVAGFFTPSSMMVGIYGKIFAVSKKHARVIDNLPENQNNQMRKDKKAAKTLGIVMGVFLLCWFPCFFTILLDPFLNFSTPAVLFDALTWFGYFNSTCNPLIYGFFYPWFRRALKYILLGKIFSSHFHNTNLFTQKETE.

At 1-36 (MASFEAQQETFDCSEYGNGSCPENERSLGVRAAMYS) the chain is on the extracellular side. N-linked (GlcNAc...) asparagine glycosylation is present at Asn-18. Intrachain disulfides connect Cys-21/Cys-185 and Cys-104/Cys-189. The chain crosses the membrane as a helical span at residues 37 to 57 (LMACAIFITIFGNLAMIISIS). Topologically, residues 58 to 67 (YFKQLHTPTN) are cytoplasmic. The chain crosses the membrane as a helical span at residues 68-88 (LLILSMAVTDFLLGFTIMPYS). Residues 89 to 106 (MVRSVENCWYFGLTFCKI) lie on the Extracellular side of the membrane. Residues 107 to 127 (HYSFDLMLSITSIFHLCSVAV) traverse the membrane as a helical segment. The Cytoplasmic segment spans residues 128–150 (DRFYAICHPLHYCTKMTIPVVRR). Residues 151–171 (LLLVCWSVPGAFAFGVVFSEA) traverse the membrane as a helical segment. Topologically, residues 172–195 (YADGIEGYDILVACSSSCPVMFNK) are extracellular. A helical transmembrane segment spans residues 196–216 (LWGTTLFVAGFFTPSSMMVGI). Residues 217 to 251 (YGKIFAVSKKHARVIDNLPENQNNQMRKDKKAAKT) lie on the Cytoplasmic side of the membrane. Residues 252 to 272 (LGIVMGVFLLCWFPCFFTILL) traverse the membrane as a helical segment. Residues 273–287 (DPFLNFSTPAVLFDA) lie on the Extracellular side of the membrane. N-linked (GlcNAc...) asparagine glycosylation is present at Asn-277. A helical transmembrane segment spans residues 288–310 (LTWFGYFNSTCNPLIYGFFYPWF). The Cytoplasmic portion of the chain corresponds to 311-339 (RRALKYILLGKIFSSHFHNTNLFTQKETE).

The protein belongs to the G-protein coupled receptor 1 family. In terms of tissue distribution, mainly expressed in neurons of the olfactory epithelium. Also present in the limbic brain areas receiving projection from the olfactory system and several brain regions, including the hippocampus, cerebellum, cortex, raphe nuclei, hypothalamus and habenula.

It is found in the cell membrane. Orphan olfactory receptor specific for trace amines. Trace amine compounds are enriched in animal body fluids and act on trace amine-associated receptors (TAARs) to elicit both intraspecific and interspecific innate behaviors. Ligand-binding causes a conformation change that triggers signaling via the G(s)-class of G-proteins which activate adenylate cyclase. May also be required to provide olfactory input into limbic brain areas to regulate emotional behaviors likely via modulation of the dopamine system. The sequence is that of Trace amine-associated receptor 2 from Mus musculus (Mouse).